Consider the following 562-residue polypeptide: Phosphomethylpyrimidine synthase (562 aa).

Residues asparagine 179, methionine 208, tyrosine 237, histidine 273, serine 293 to glycine 295, aspartate 334 to arginine 337, and glutamate 373 contribute to the substrate site. Histidine 377 contributes to the Zn(2+) binding site. Tyrosine 400 is a binding site for substrate. Histidine 441 is a binding site for Zn(2+). Positions 521, 524, and 529 each coordinate [4Fe-4S] cluster.

This sequence belongs to the ThiC family. It depends on [4Fe-4S] cluster as a cofactor.

It catalyses the reaction 5-amino-1-(5-phospho-beta-D-ribosyl)imidazole + S-adenosyl-L-methionine = 4-amino-2-methyl-5-(phosphooxymethyl)pyrimidine + CO + 5'-deoxyadenosine + formate + L-methionine + 3 H(+). It functions in the pathway cofactor biosynthesis; thiamine diphosphate biosynthesis. Catalyzes the synthesis of the hydroxymethylpyrimidine phosphate (HMP-P) moiety of thiamine from aminoimidazole ribotide (AIR) in a radical S-adenosyl-L-methionine (SAM)-dependent reaction. The chain is Phosphomethylpyrimidine synthase from Geobacillus kaustophilus (strain HTA426).